The sequence spans 289 residues: Bis(5'-nucleosyl)-tetraphosphatase, symmetrical (289 aa).

It belongs to the Ap4A hydrolase family.

It carries out the reaction P(1),P(4)-bis(5'-adenosyl) tetraphosphate + H2O = 2 ADP + 2 H(+). In terms of biological role, hydrolyzes diadenosine 5',5'''-P1,P4-tetraphosphate to yield ADP. The chain is Bis(5'-nucleosyl)-tetraphosphatase, symmetrical from Yersinia pseudotuberculosis serotype O:3 (strain YPIII).